A 307-amino-acid polypeptide reads, in one-letter code: Membrane protein insertase YidC 1 (307 aa).

The signal sequence occupies residues 1-22 (MKSKKGLTLTITLGTLALFLSG). Cysteine 23 is lipidated: N-palmitoyl cysteine. The S-diacylglycerol cysteine moiety is linked to residue cysteine 23. 5 consecutive transmembrane segments (helical) span residues 59 to 79 (YGWA…PMMI), 136 to 156 (GIGC…YYAI), 177 to 197 (LILA…SMIG), 205 to 225 (TMRL…MSAP), and 226 to 246 (AGLG…TLII). The tract at residues 260 to 307 (ELKKHPIKTPTPTQPKPINATESKPSHPRPQNNAGRGRNAGKQQRHHK) is disordered.

It belongs to the OXA1/ALB3/YidC family. Type 2 subfamily.

It is found in the cell membrane. Functionally, required for the insertion and/or proper folding and/or complex formation of integral membrane proteins into the membrane. Involved in integration of membrane proteins that insert both dependently and independently of the Sec translocase complex, as well as at least some lipoproteins. The sequence is that of Membrane protein insertase YidC 1 from Lactiplantibacillus plantarum (strain ATCC BAA-793 / NCIMB 8826 / WCFS1) (Lactobacillus plantarum).